The primary structure comprises 104 residues: Large ribosomal subunit protein uL24 (104 aa).

This sequence belongs to the universal ribosomal protein uL24 family. As to quaternary structure, part of the 50S ribosomal subunit.

One of two assembly initiator proteins, it binds directly to the 5'-end of the 23S rRNA, where it nucleates assembly of the 50S subunit. Functionally, one of the proteins that surrounds the polypeptide exit tunnel on the outside of the subunit. In Buchnera aphidicola subsp. Schizaphis graminum (strain Sg), this protein is Large ribosomal subunit protein uL24.